Here is a 600-residue protein sequence, read N- to C-terminus: DDB1- and CUL4-associated factor 15 (600 aa).

Residues 1-29 (MAPSSKSERNSGAGSAGGGPGGTGGKRAV) form a disordered region. Positions 14–27 (GSAGGGPGGTGGKR) are enriched in gly residues. The residue at position 50 (Ser50) is a Phosphoserine. Zn(2+) contacts are provided by Cys193, Cys196, Cys211, and His214. A Phosphoserine modification is found at Ser314. Basic and acidic residues predominate over residues 334-343 (AKGSPLEETR). Positions 334–384 (AKGSPLEETRLPSSLGPSSSRCRPSLEPQAPSGEVVPRDSPPAAETTAPEP) are disordered. Low complexity-rich tracts occupy residues 344–359 (LPSSLGPSSSRCRPSL) and 374–384 (PPAAETTAPEP).

In terms of assembly, component of the DCX(DCAF15) complex, also named CLR4(DCAF15) complex, composed of DCAF15, DDB1, cullin-4 (CUL4A or CUL4B), DDA1 and RBX1.

It participates in protein modification; protein ubiquitination. In terms of biological role, substrate-recognition component of the DCX(DCAF15) complex, a cullin-4-RING E3 ubiquitin-protein ligase complex that mediates ubiquitination and degradation of target proteins. The DCX(DCAF15) complex acts as a regulator of the natural killer (NK) cells effector functions, possibly by mediating ubiquitination and degradation of cohesin subunits SMC1A and SMC3. May play a role in the activation of antigen-presenting cells (APC) and their interaction with NK cells. The polypeptide is DDB1- and CUL4-associated factor 15 (Mus musculus (Mouse)).